Reading from the N-terminus, the 393-residue chain is NAD(P)H-quinone oxidoreductase subunit H, chloroplastic (393 aa).

The protein belongs to the complex I 49 kDa subunit family. NDH is composed of at least 16 different subunits, 5 of which are encoded in the nucleus.

The protein resides in the plastid. It is found in the chloroplast thylakoid membrane. It carries out the reaction a plastoquinone + NADH + (n+1) H(+)(in) = a plastoquinol + NAD(+) + n H(+)(out). The catalysed reaction is a plastoquinone + NADPH + (n+1) H(+)(in) = a plastoquinol + NADP(+) + n H(+)(out). Its function is as follows. NDH shuttles electrons from NAD(P)H:plastoquinone, via FMN and iron-sulfur (Fe-S) centers, to quinones in the photosynthetic chain and possibly in a chloroplast respiratory chain. The immediate electron acceptor for the enzyme in this species is believed to be plastoquinone. Couples the redox reaction to proton translocation, and thus conserves the redox energy in a proton gradient. The polypeptide is NAD(P)H-quinone oxidoreductase subunit H, chloroplastic (Populus alba (White poplar)).